The primary structure comprises 167 residues: Phospholipase A2 imperatoxin-1 (167 aa).

Residues Trp38, Gly40, and Gly42 each coordinate Ca(2+). 5 cysteine pairs are disulfide-bonded: Cys39-Cys61, Cys60-Cys99, Cys67-Cys92, Cys90-Cys127, and Cys132-Cys144. His64 is an active-site residue. Ca(2+) is bound at residue Asp65. An N-linked (GlcNAc...) asparagine glycan is attached at Asn102. Positions 136 to 140 (RRLAR) are excised as a propeptide.

Belongs to the phospholipase A2 family. Group III subfamily. As to quaternary structure, heterodimer composed of a large subunit and a small subunit; disulfide-linked. Ca(2+) is required as a cofactor. Expressed by the venom gland.

The protein resides in the secreted. The catalysed reaction is a 1,2-diacyl-sn-glycero-3-phosphocholine + H2O = a 1-acyl-sn-glycero-3-phosphocholine + a fatty acid + H(+). In terms of biological role, phospholipase toxin, which may catalyze the calcium-dependent hydrolysis of the 2-acyl groups in 3-sn-phosphoglycerides. Inhibits both skeletal (RYR1) and cardiac (RYR2) ryanodine receptors (calcium release channels). Probably blocks ryanodine receptors by generating a lipid product. The polypeptide is Phospholipase A2 imperatoxin-1 (Pandinus imperator (Emperor scorpion)).